Here is a 504-residue protein sequence, read N- to C-terminus: Fibroblast growth factor receptor-like 1 (504 aa).

The first 24 residues, 1–24 (MTPSPLLLLLLPPLLLGAFPPAAA), serve as a signal peptide directing secretion. Residues 25-378 (ARGPPKMADK…SSSATSLPWP (354 aa)) are Extracellular-facing. The Ig-like C2-type 1 domain maps to 29–115 (PKMADKVVPR…GSLSVNYTLV (87 aa)). Cysteines 51 and 99 form a disulfide. Asparagine 111 is a glycosylation site (N-linked (GlcNAc...) asparagine). The interval 123 to 155 (GKESLGPDSSSGGQEDPASQQWARPRFTQPSKM) is disordered. Over residues 129 to 144 (PDSSSGGQEDPASQQW) the composition is skewed to polar residues. Ig-like C2-type domains follow at residues 147–237 (PRFT…YKVD) and 246–354 (PVLT…AFLT). A disulfide bridge links cysteine 172 with cysteine 221. Asparagine 231, asparagine 255, and asparagine 293 each carry an N-linked (GlcNAc...) asparagine glycan. Cysteine 268 and cysteine 338 are disulfide-bonded. A helical transmembrane segment spans residues 379-399 (VVIGIPAGAVFILGTLLLWLC). Residues 400-504 (QAQKKPCTPA…KVHQHIHYQC (105 aa)) lie on the Cytoplasmic side of the membrane. Residues 407-418 (TPAPAPPLPGHR) show a composition bias toward pro residues. The disordered stretch occupies residues 407 to 435 (TPAPAPPLPGHRPPGTARDRSGDKDLPSL). The segment covering 423–432 (ARDRSGDKDL) has biased composition (basic and acidic residues).

Interacts with FGF2 with a low affinity. Expressed preferentially in cartilaginous tissues and pancreas. Highly expressed in the liver, kidney, heart, brain and skeletal muscle. Weakly expressed in the lung, small intestine and spleen.

The protein localises to the membrane. In terms of biological role, has a negative effect on cell proliferation. The protein is Fibroblast growth factor receptor-like 1 (FGFRL1) of Homo sapiens (Human).